The chain runs to 108 residues: Urease subunit gamma (108 aa).

The protein belongs to the urease gamma subunit family. In terms of assembly, heterotrimer of UreA (gamma), UreB (beta) and UreC (alpha) subunits. Three heterotrimers associate to form the active enzyme.

The protein localises to the cytoplasm. The catalysed reaction is urea + 2 H2O + H(+) = hydrogencarbonate + 2 NH4(+). It functions in the pathway nitrogen metabolism; urea degradation; CO(2) and NH(3) from urea (urease route): step 1/1. The polypeptide is Urease subunit gamma (Haloquadratum walsbyi (strain DSM 16790 / HBSQ001)).